Here is a 338-residue protein sequence, read N- to C-terminus: NAD kinase (338 aa).

Residue Asp-66 is the Proton acceptor of the active site. NAD(+)-binding positions include 66–67 (DG), Arg-71, 141–142 (ND), Lys-152, Asp-171, 182–187 (TAYAFS), and Ala-206. Positions 317–338 (GDAGVAGTEPDKPGERDGKAGA) are disordered. A compositionally biased stretch (basic and acidic residues) spans 325–338 (EPDKPGERDGKAGA).

It belongs to the NAD kinase family. It depends on a divalent metal cation as a cofactor.

The protein localises to the cytoplasm. It carries out the reaction NAD(+) + ATP = ADP + NADP(+) + H(+). Involved in the regulation of the intracellular balance of NAD and NADP, and is a key enzyme in the biosynthesis of NADP. Catalyzes specifically the phosphorylation on 2'-hydroxyl of the adenosine moiety of NAD to yield NADP. This chain is NAD kinase, found in Bifidobacterium longum subsp. infantis (strain ATCC 15697 / DSM 20088 / JCM 1222 / NCTC 11817 / S12).